Reading from the N-terminus, the 434-residue chain is Vi polysaccharide export inner-membrane protein VexD (434 aa).

Residues 1-50 (MENSERIKKWKEERAKVAQESRASRLQQKEDERALRQTEKSADAKSHHNP) show a composition bias toward basic and acidic residues. The disordered stretch occupies residues 1–58 (MENSERIKKWKEERAKVAQESRASRLQQKEDERALRQTEKSADAKSHHNPDAGWSATD). A run of 2 helical transmembrane segments spans residues 84–104 (LFLY…ILTS) and 409–429 (WLLF…LITI).

The protein belongs to the BexC/CtrB/KpsE family.

Its subcellular location is the cell inner membrane. Its function is as follows. May form an ATP-driven capsule polysaccharide export apparatus, in association with the VexA, VexB and VexC proteins. The chain is Vi polysaccharide export inner-membrane protein VexD (vexD) from Salmonella typhi.